Consider the following 439-residue polypeptide: Tryptophan synthase beta chain 2 (439 aa).

K99 is subject to N6-(pyridoxal phosphate)lysine.

It belongs to the TrpB family. As to quaternary structure, tetramer of two alpha and two beta chains. It depends on pyridoxal 5'-phosphate as a cofactor.

The catalysed reaction is (1S,2R)-1-C-(indol-3-yl)glycerol 3-phosphate + L-serine = D-glyceraldehyde 3-phosphate + L-tryptophan + H2O. It participates in amino-acid biosynthesis; L-tryptophan biosynthesis; L-tryptophan from chorismate: step 5/5. In terms of biological role, the beta subunit is responsible for the synthesis of L-tryptophan from indole and L-serine. The polypeptide is Tryptophan synthase beta chain 2 (trpB2) (Corynebacterium efficiens (strain DSM 44549 / YS-314 / AJ 12310 / JCM 11189 / NBRC 100395)).